A 260-amino-acid chain; its full sequence is MVKFYDRDISSRLLIGSALYPSPAIMQDAIRDSGAEIVTVSLRRETAGGKAGDQFWSLIRELGVTVLPNTAGCRSVREAVTTAKLARELFATSWIKLEVIADNDTLQPDVVGLVEAAQILIKDGFEVFPYCTEDLSVALRLVDAGCRVIMPWAAPIGSARGITNRDALKLLRDRLPDITLVVDAGLGAPSHAAEAMELGYDAVLLNTAIAKAEDPVAMARAFRLAVDAGRLGYQAGLMGARDFASPSTPVIGTPFWHAVS.

Lys-96 (schiff-base intermediate with DXP) is an active-site residue. Residues Gly-157, 184-185, and 206-207 contribute to the 1-deoxy-D-xylulose 5-phosphate site; these read AG and NT.

The protein belongs to the ThiG family. As to quaternary structure, homotetramer. Forms heterodimers with either ThiH or ThiS.

It is found in the cytoplasm. It catalyses the reaction [ThiS sulfur-carrier protein]-C-terminal-Gly-aminoethanethioate + 2-iminoacetate + 1-deoxy-D-xylulose 5-phosphate = [ThiS sulfur-carrier protein]-C-terminal Gly-Gly + 2-[(2R,5Z)-2-carboxy-4-methylthiazol-5(2H)-ylidene]ethyl phosphate + 2 H2O + H(+). The protein operates within cofactor biosynthesis; thiamine diphosphate biosynthesis. In terms of biological role, catalyzes the rearrangement of 1-deoxy-D-xylulose 5-phosphate (DXP) to produce the thiazole phosphate moiety of thiamine. Sulfur is provided by the thiocarboxylate moiety of the carrier protein ThiS. In vitro, sulfur can be provided by H(2)S. The sequence is that of Thiazole synthase from Rhodopseudomonas palustris (strain BisB5).